A 478-amino-acid polypeptide reads, in one-letter code: Phenylalanine--tRNA ligase alpha subunit (478 aa).

Residues T318, 357-359 (QLE), and Y397 each bind L-phenylalanine. E399 provides a ligand contact to Mg(2+). F422 is a binding site for L-phenylalanine.

The protein belongs to the class-II aminoacyl-tRNA synthetase family. Phe-tRNA synthetase alpha subunit type 2 subfamily. In terms of assembly, tetramer of two alpha and two beta subunits. Mg(2+) is required as a cofactor.

The protein localises to the cytoplasm. It carries out the reaction tRNA(Phe) + L-phenylalanine + ATP = L-phenylalanyl-tRNA(Phe) + AMP + diphosphate + H(+). In Methanospirillum hungatei JF-1 (strain ATCC 27890 / DSM 864 / NBRC 100397 / JF-1), this protein is Phenylalanine--tRNA ligase alpha subunit.